The primary structure comprises 492 residues: Polyamine oxidase 5 (492 aa).

FAD is bound by residues Glu-55, Arg-63, Val-244, and Glu-431. Residues 490–492 (SRL) carry the Microbody targeting signal motif.

The protein belongs to the flavin monoamine oxidase family. It depends on FAD as a cofactor. In terms of tissue distribution, widely expressed.

The protein localises to the peroxisome. It catalyses the reaction spermine + O2 + H2O = 3-aminopropanal + spermidine + H2O2. The enzyme catalyses norspermine + O2 + H2O = norspermidine + 3-aminopropanal + H2O2. The catalysed reaction is thermospermine + O2 + H2O = 3-aminopropanal + spermidine + H2O2. It functions in the pathway amine and polyamine degradation; spermine degradation. Its function is as follows. Flavoenzyme involved in polyamine back-conversion. Catalyzes the oxidation of the secondary amino group of polyamines, such as spermine. Substrate preference is spermine &gt; thermospermine &gt; norspermine. No activity detected when putrescine, spermidine or N(1)-acetylspermidine are used as substrates. Plays an important role in the regulation of polyamine intracellular concentration. May play a role in producing hydrogen peroxide during seed germination. In Oryza sativa subsp. japonica (Rice), this protein is Polyamine oxidase 5.